The chain runs to 105 residues: Tyrosine-protein phosphatase 12 (105 aa).

One can recognise a Tyrosine-protein phosphatase domain in the interval 1 to 105 (WRMIWEKRVE…NLRRIVRTEF (105 aa)). Asp-84 contacts substrate.

It belongs to the protein-tyrosine phosphatase family.

The enzyme catalyses O-phospho-L-tyrosyl-[protein] + H2O = L-tyrosyl-[protein] + phosphate. This Styela plicata (Wrinkled sea squirt) protein is Tyrosine-protein phosphatase 12 (STY-12).